The chain runs to 317 residues: Acetyl-coenzyme A carboxylase carboxyl transferase subunit alpha (317 aa).

Residues 39–293 form the CoA carboxyltransferase C-terminal domain; the sequence is KLEGKAQEAL…GNAIAEAMGS (255 aa).

It belongs to the AccA family. In terms of assembly, acetyl-CoA carboxylase is a heterohexamer composed of biotin carboxyl carrier protein (AccB), biotin carboxylase (AccC) and two subunits each of ACCase subunit alpha (AccA) and ACCase subunit beta (AccD).

It is found in the cytoplasm. It carries out the reaction N(6)-carboxybiotinyl-L-lysyl-[protein] + acetyl-CoA = N(6)-biotinyl-L-lysyl-[protein] + malonyl-CoA. Its pathway is lipid metabolism; malonyl-CoA biosynthesis; malonyl-CoA from acetyl-CoA: step 1/1. Its function is as follows. Component of the acetyl coenzyme A carboxylase (ACC) complex. First, biotin carboxylase catalyzes the carboxylation of biotin on its carrier protein (BCCP) and then the CO(2) group is transferred by the carboxyltransferase to acetyl-CoA to form malonyl-CoA. The protein is Acetyl-coenzyme A carboxylase carboxyl transferase subunit alpha of Azorhizobium caulinodans (strain ATCC 43989 / DSM 5975 / JCM 20966 / LMG 6465 / NBRC 14845 / NCIMB 13405 / ORS 571).